A 67-amino-acid chain; its full sequence is Protein AaeX (67 aa).

The next 2 helical transmembrane spans lie at 8–28 and 47–67; these read VLFGLSFPPAFFALLAALPLF and PALFNCALYGCLFYLVSWLFI.

This sequence belongs to the AaeX family.

It localises to the cell membrane. The polypeptide is Protein AaeX (Edwardsiella piscicida).